We begin with the raw amino-acid sequence, 415 residues long: Thylakoid ADP,ATP carrier protein, chloroplastic (415 aa).

A chloroplast-targeting transit peptide spans 1–61 (MGEEKSLLQF…NFASLSVAIR (61 aa)). A run of 5 helical transmembrane segments spans residues 106–126 (IALL…AFAG), 182–207 (LPQV…KLFR), 219–239 (LGAG…LDVL), 273–293 (GPSL…FDLV), and 309–329 (LLTA…LDTI). 3 Solcar repeats span residues 113–205 (PKDA…YKKL), 213–296 (LSVL…VKKS), and 307–387 (SSLL…VKKL). R187 is an ADP binding site. R330 contacts ADP. Residues 362 to 388 (GFVPNALKSMPNSSIKLTTFDIVKKLI) form a helical membrane-spanning segment.

The protein belongs to the mitochondrial carrier (TC 2.A.29) family. Highly expressed in developing photosynthetic organs such as leaves, flower buds and green siliques. Also detected in roots, flowers, mature leaves and stems.

Its subcellular location is the plastid. It localises to the chloroplast thylakoid membrane. The protein resides in the chloroplast envelope. With respect to regulation, KM and Vmax values toward ATP only are increased by m-chlorocarbonyl cyanide phenylhydrazone (CCCP). The corresponding values for ADP are not affected. Functionally, specifically transports adenine nucleotides. Involved in the uptake of ATP into thylakoids in exchange for lumenal ADP. The polypeptide is Thylakoid ADP,ATP carrier protein, chloroplastic (TAAC) (Arabidopsis thaliana (Mouse-ear cress)).